A 1203-amino-acid chain; its full sequence is MSEVKLTPEQNEAIHSSGKNILVSASAGSGKTFVMAQRIVEKVKQGIEIDRLFISTFTKKAASELRMRLERDLKKARQESSDENQACRLTLALQNLSNADIGTMDSFTQKLTKTNFNRVNIDPNFRILADQTESDLIRQEVFEQLVESYLSGDDGLNISKEKFEELIKNFSKDRNIAGFQKVVYTIYRFASATENPIKWLENQFLKGFETYKSLIDLSADFSADIKENLLIFFELLETSLTNGVVAKKGAGRDKANLILDNKNELLEAITTKDFATFTELFLSIDTDIRVGSSKDEILSALKKDFSVQKQDLVGSKSKPGEIRKFVDKIKHGQLIEKYQNQAFEIAENLQKFVIEFYQSYLERKKNENAFEYSDIAHFAIEILEENPDIRETLREHYDEIMIDEYQDTSHTQERMLELLSNGHNLFMVGDIKQSIYGFRLADPGLFLEKYKDYAKTENPNQLIRLKENFRSRGEVLTFTNDIFKHLMDEKLGEMTYGKEEALVQGNITDYPVESEKDFYPELLLYKENTSDEETDESEVRISDGEIKGAAQEIKKLIEAGVEPKDIAILVRSKSNNNKIEDILLSYDIPVVLDEGRVDFLKSMEVLIMLDVLRAIDNPLYDLSLVAMLRSPLFGFNEDELTRISTQGSHDLRFWDKILLSLNKEGQNPELINPSLENKLKAFYKKFTEWRKLVNQVAIHDLLWKIYTETYYFDYVGALKNGEIRQANLQALAVRAESYESSGYKGLFKFVRLINKFMEQNNDLASVNIKLPQSAVRVMTFHKSKGLEFDYVFLMNLQSRFNDRDLKENVILSRENGLGMKLIADLKDEADVITDFPYALVKMETFPYMVNKDLKQRAALSEEMRVLYVAFTRAKKKLYLVGKIKETDKKSGLDLYDNASLEGKILEDKFRNSSRGFQHWILALQNATKLPIKLNVYTKEELEAEKLEFTSQPDFKKLVEESEKFDNIMAHSDEIQKAQKIMNYEYPHQAATELSSIQTPSQVKKRSYEKQLQVGEIQPKSEFTRVKKLDFSDFGPKKVTAAEIGSATHSFMQYADFSQADLFSFQATLDEMGFDEKIKNQIDIAKILTLFDTDFGQFLSENVDKTVKEAPFSMLRTDEFAKEQYIVRGICDGFVKLTDKIVLFDYKTDRFTSSSAISEIKERYRDQMNLYSEALKKAYDVNQVDKYLILLGGPQQVFVEKLDD.

Residues 4–472 (VKLTPEQNEA…IRLKENFRSR (469 aa)) form the UvrD-like helicase ATP-binding domain. 25-32 (ASAGSGKT) contributes to the ATP binding site. One can recognise a UvrD-like helicase C-terminal domain in the interval 503-785 (VQGNITDYPV…RVMTFHKSKG (283 aa)).

The protein belongs to the helicase family. AddA subfamily. In terms of assembly, heterodimer of AddA and AddB/RexB. Mg(2+) serves as cofactor.

It carries out the reaction Couples ATP hydrolysis with the unwinding of duplex DNA by translocating in the 3'-5' direction.. It catalyses the reaction ATP + H2O = ADP + phosphate + H(+). Its function is as follows. The heterodimer acts as both an ATP-dependent DNA helicase and an ATP-dependent, dual-direction single-stranded exonuclease. Recognizes the chi site generating a DNA molecule suitable for the initiation of homologous recombination. The AddA nuclease domain is required for chi fragment generation; this subunit has the helicase and 3' -&gt; 5' nuclease activities. This chain is ATP-dependent helicase/nuclease subunit A, found in Lactococcus lactis subsp. lactis (strain IL1403) (Streptococcus lactis).